Consider the following 455-residue polypeptide: Kynurenine--oxoglutarate transaminase 3 (455 aa).

Glycine 72 is a substrate binding site. Lysine 117 is modified (N6-acetyllysine; alternate). Lysine 117 is subject to N6-succinyllysine; alternate. Asparagine 219 contacts substrate. Lysine 281 is modified (N6-(pyridoxal phosphate)lysine). Arginine 430 contributes to the substrate binding site.

It belongs to the class-I pyridoxal-phosphate-dependent aminotransferase family. As to quaternary structure, homodimer. Pyridoxal 5'-phosphate is required as a cofactor. In terms of tissue distribution, widely expressed, with higher expression levels in liver, kidney, heart and neuroendocrine tissues.

It catalyses the reaction L-kynurenine + 2-oxoglutarate = kynurenate + L-glutamate + H2O. It carries out the reaction L-kynurenine + glyoxylate = kynurenate + glycine + H2O. The catalysed reaction is 3-hydroxy-L-kynurenine + glyoxylate = xanthurenate + glycine + H2O. The enzyme catalyses an S-substituted L-cysteine + H2O = a thiol + pyruvate + NH4(+). Its pathway is amino-acid degradation; L-kynurenine degradation; kynurenate from L-kynurenine: step 1/2. Kynurenine transamination is competitively inhibited by cysteine, glutamine, histidine, methionine, leucine, or phenylalanine. Its function is as follows. Catalyzes the irreversible transamination of the L-tryptophan metabolite L-kynurenine to form kynurenic acid (KA), an intermediate in the tryptophan catabolic pathway which is also a broad spectrum antagonist of the three ionotropic excitatory amino acid receptors among others. May catalyze the beta-elimination of S-conjugates and Se-conjugates of L-(seleno)cysteine, resulting in the cleavage of the C-S or C-Se bond. Has transaminase activity towards L-kynurenine, tryptophan, phenylalanine, serine, cysteine, methionine, histidine, glutamine and asparagine with glyoxylate as an amino group acceptor (in vitro). Has lower activity with 2-oxoglutarate as amino group acceptor (in vitro). The polypeptide is Kynurenine--oxoglutarate transaminase 3 (Kyat3) (Mus musculus (Mouse)).